A 467-amino-acid chain; its full sequence is Glutamate--tRNA ligase (467 aa).

The 'HIGH' region motif lies at Pro10–Gly20. 4 residues coordinate Zn(2+): Cys99, Cys101, Cys126, and Glu128. Positions Arg237–Arg241 match the 'KMSKS' region motif. ATP is bound at residue Lys240.

It belongs to the class-I aminoacyl-tRNA synthetase family. Glutamate--tRNA ligase type 1 subfamily. Monomer. Zn(2+) is required as a cofactor.

It localises to the cytoplasm. It catalyses the reaction tRNA(Glu) + L-glutamate + ATP = L-glutamyl-tRNA(Glu) + AMP + diphosphate. Catalyzes the attachment of glutamate to tRNA(Glu) in a two-step reaction: glutamate is first activated by ATP to form Glu-AMP and then transferred to the acceptor end of tRNA(Glu). The sequence is that of Glutamate--tRNA ligase from Geotalea uraniireducens (strain Rf4) (Geobacter uraniireducens).